A 470-amino-acid chain; its full sequence is MSAAKPTTLYDKIWNDHLVHEAEDGTCLLYIDRHLVHEVTSPQAFEGLRTAGRKVHAPEKTLAVVDHNVPTTDRSKPNPDPESAEQIAALAENARDFGVTYYNEFDKRQGVVHVIGPEQGFTLPGTTIVCGDSHTSTHGAFGALAHGIGTSEVEHVLATQTLIQKKAKNMRVTVDGDLPDGVTAKDIILAIIGEIGTAGGTGYVLEYAGDAIRALSMEGRMTVCNMSIEGGARAGLIAPDEKAYAYLKGRPMAPTGAHWDAAMRYWDTLRSDEGAHFDHELRLDAAALPPIVTWGTSPEDVISVTGKVPNPADIADEAKRLSKERALAYMGLTPGTKITDIKIDRMFIGSCTNGRIEDLRAAAKVAEGKTVNANVNAIIVPGSGLVKEQAEAEGLDKIFVKAGFEWREPGCSMCLAMNPDKLAPEERCASTSNRNFEGRQGFKGRTHLVSPAMAAAAAIAGHFVDIRDWR.

The [4Fe-4S] cluster site is built by Cys351, Cys411, and Cys414.

The protein belongs to the aconitase/IPM isomerase family. LeuC type 1 subfamily. As to quaternary structure, heterodimer of LeuC and LeuD. The cofactor is [4Fe-4S] cluster.

It carries out the reaction (2R,3S)-3-isopropylmalate = (2S)-2-isopropylmalate. It functions in the pathway amino-acid biosynthesis; L-leucine biosynthesis; L-leucine from 3-methyl-2-oxobutanoate: step 2/4. Catalyzes the isomerization between 2-isopropylmalate and 3-isopropylmalate, via the formation of 2-isopropylmaleate. This Rhodopseudomonas palustris (strain HaA2) protein is 3-isopropylmalate dehydratase large subunit.